Here is a 260-residue protein sequence, read N- to C-terminus: Indole-3-glycerol phosphate synthase (260 aa).

The protein belongs to the TrpC family.

It carries out the reaction 1-(2-carboxyphenylamino)-1-deoxy-D-ribulose 5-phosphate + H(+) = (1S,2R)-1-C-(indol-3-yl)glycerol 3-phosphate + CO2 + H2O. It participates in amino-acid biosynthesis; L-tryptophan biosynthesis; L-tryptophan from chorismate: step 4/5. The protein is Indole-3-glycerol phosphate synthase of Acetivibrio thermocellus (strain ATCC 27405 / DSM 1237 / JCM 9322 / NBRC 103400 / NCIMB 10682 / NRRL B-4536 / VPI 7372) (Clostridium thermocellum).